The following is a 351-amino-acid chain: c-di-GMP synthase (351 aa).

The protein belongs to the CD-NTase family. E05 subfamily.

The catalysed reaction is 2 GTP = 3',3'-c-di-GMP + 2 diphosphate. Its function is as follows. Cyclic nucleotide synthase (second messenger synthase) of a CBASS antivirus system. CBASS (cyclic oligonucleotide-based antiphage signaling system) provides immunity against bacteriophage. The CD-NTase protein synthesizes cyclic nucleotides in response to infection; these serve as specific second messenger signals. The signals activate a diverse range of effectors, leading to bacterial cell death and thus abortive phage infection. A type I-D(GG) CBASS system. In terms of biological role, cyclic dinucleotide synthase that catalyzes the synthesis of c-di-GMP, has no activity with other NTP substrates. This is c-di-GMP synthase (cdnE) from Capnocytophaga granulosa (strain ATCC 51502 / DSM 11449 / JCM 8566 / LMG 16022 / NCTC 12948 / B0611).